The sequence spans 1896 residues: Plexin-A1 (1896 aa).

The first 26 residues, 1–26, serve as a signal peptide directing secretion; sequence MPLPPRSLQVLLLLLLLLLLLPGMWA. In terms of domain architecture, Sema spans 27–512; sequence EAGLPRAGGG…TEKQVTRVPV (486 aa). Topologically, residues 27 to 1244 are extracellular; it reads EAGLPRAGGG…VYSDSLLTLP (1218 aa). Asparagine 77 carries N-linked (GlcNAc...) asparagine glycosylation. 10 disulfides stabilise this stretch: cysteine 95-cysteine 104, cysteine 130-cysteine 138, cysteine 286-cysteine 407, cysteine 302-cysteine 358, cysteine 376-cysteine 395, cysteine 515-cysteine 532, cysteine 521-cysteine 563, cysteine 524-cysteine 541, cysteine 535-cysteine 547, and cysteine 598-cysteine 617. Asparagine 660, asparagine 672, and asparagine 701 each carry an N-linked (GlcNAc...) asparagine glycan. IPT/TIG domains lie at 864-959, 961-1045, 1048-1147, and 1150-1236; these read PKIL…FTFV, PTFY…YNYT, PTIL…FLYY, and PVLE…LQVY. Residue asparagine 1043 is glycosylated (N-linked (GlcNAc...) asparagine). Asparagine 1187 and asparagine 1212 each carry an N-linked (GlcNAc...) asparagine glycan. Residues 1245–1265 form a helical membrane-spanning segment; the sequence is AIVGIGGGGGLLLLVIVAVLI. The stretch at 1264–1317 forms a coiled coil; it reads LIAYKRKSRDADRTLKRLQLQMDNLESRVALECKEAFAELQTDIHELTNDLDGA. Topologically, residues 1266–1896 are cytoplasmic; it reads AYKRKSRDAD…QVVDTMALSS (631 aa).

Belongs to the plexin family. In terms of assembly, interacts directly with NRP1 and NRP2. Interacts with PLXN1B. Interacts with FARP2, RND1 and KDR/VEGFR2. Binding of SEMA3A leads to dissociation of FARP2. Interacts with CRMP1, DPYSL2/CRMP2, DPYSL3/CRMP3 and DPYSL4/CRMP4. Interacts (via TIG domains) with TREM2; the interaction mediates SEMA6D binding and signaling through TYROBP. Detected in fetal brain, lung, liver and kidney.

Its subcellular location is the cell membrane. Its function is as follows. Coreceptor for SEMA3A, SEMA3C, SEMA3F and SEMA6D. Necessary for signaling by class 3 semaphorins and subsequent remodeling of the cytoskeleton. Plays a role in axon guidance, invasive growth and cell migration. Class 3 semaphorins bind to a complex composed of a neuropilin and a plexin. The plexin modulates the affinity of the complex for specific semaphorins, and its cytoplasmic domain is required for the activation of down-stream signaling events in the cytoplasm. Acts as coreceptor of TREM2 for SEMA6D in dendritic cells and is involved in the generation of immune responses and skeletal homeostasis. The chain is Plexin-A1 from Homo sapiens (Human).